The primary structure comprises 993 residues: Type II inositol 1,4,5-trisphosphate 5-phosphatase (993 aa).

The 127-residue stretch at 22–148 (QGVLCKGDSR…PEFEWLSRHT (127 aa)) folds into the PH domain. Basic and acidic residues-rich tracts occupy residues 149 to 163 (CAEPDAESPKPREWN) and 294 to 303 (SKSDMSEKVR). Disordered regions lie at residues 149-191 (CAEP…GLED) and 236-304 (EALE…KVRS). Residues 342-668 (IQNFRFFVGT…LDKMENANIP (327 aa)) form a 5-phosphatase region. Mg(2+) contacts are provided by Asn-355 and Glu-383. Residues Glu-383, 459-460 (NK), 582-583 (YK), and 596-598 (KCR) contribute to the substrate site. An ASH region spans residues 669-782 (SVTLSKREFC…LSVSGNYLPS (114 aa)). The Rho-GAP domain maps to 821 to 993 (SQLENPMEIP…FIHQFLCGPL (173 aa)). At Cys-990 the chain carries Cysteine methyl ester. Cys-990 carries the S-farnesyl cysteine lipid modification. The propeptide at 991–993 (GPL) is removed in mature form.

It belongs to the inositol 1,4,5-trisphosphate 5-phosphatase type II family. Interacts with APPL1, PHETA1 and PHETA2. Interacts with several Rab GTPases, at least RAB1A, RAB2A, RAB5A, RAB6A, RAB8A, RAB9A and RAB33B; these interactions may play a dual role in targeting INPP5B to the specific membranes and stimulating its phosphatase activity. Interacts preferentially with non-phosphorylated RAB8A; phosphorylation of RAB8A on 'Thr-72' disrupts this interaction. Interacts with INPP5F. In terms of processing, isoprenylation at Cys-990 may be required for localization at the membrane. May be proteolytically cleaved after Lys-320 as inferred from N-terminal protein sequence of the 75 kda form. As to expression, detected in kidney, liver, brain, lung and testis (at protein level). Detected in kidney and liver, and at lower levels in brain, lung and testis.

The protein localises to the cytoplasm. The protein resides in the cytosol. It is found in the endoplasmic reticulum-Golgi intermediate compartment. Its subcellular location is the early endosome membrane. It localises to the membrane. The protein localises to the cytoplasmic vesicle. The protein resides in the phagosome membrane. It carries out the reaction a 1,2-diacyl-sn-glycero-3-phospho-(1D-myo-inositol-4,5-bisphosphate) + H2O = a 1,2-diacyl-sn-glycero-3-phospho-(1D-myo-inositol 4-phosphate) + phosphate. In terms of biological role, hydrolyzes phosphatidylinositol 4,5-bisphosphate (PtIns(4,5)P2) and the signaling molecule phosphatidylinositol 1,4,5-trisphosphate (PtIns(1,4,5)P3), and thereby modulates cellular signaling events. The chain is Type II inositol 1,4,5-trisphosphate 5-phosphatase (Inpp5b) from Mus musculus (Mouse).